Here is a 295-residue protein sequence, read N- to C-terminus: Virginiamycin B lyase (295 aa).

Residue His-228 participates in substrate binding. Glu-268 is a Mg(2+) binding site. Residue His-270 is the Proton acceptor of the active site. A Mg(2+)-binding site is contributed by Glu-285.

It belongs to the Vgb family. In terms of assembly, monomer. The cofactor is Mg(2+).

In terms of biological role, inactivates the type B streptogramin antibiotics by linearizing the lactone ring at the ester linkage, generating a free phenylglycine carboxylate and converting the threonyl moiety into 2-amino-butenoic acid. The polypeptide is Virginiamycin B lyase (Clostridium beijerinckii (strain ATCC 51743 / NCIMB 8052) (Clostridium acetobutylicum)).